A 117-amino-acid chain; its full sequence is Appetite-regulating hormone (117 aa).

The N-terminal stretch at 1–23 is a signal peptide; sequence MPSPGTVCSLLLFSMLWADLAMA. Ser-26 carries the O-decanoyl serine; alternate lipid modification. Ser-26 carries the O-hexanoyl serine; alternate lipid modification. Residue Ser-26 is the site of O-octanoyl serine; alternate attachment. Residues 29–52 form a disordered region; sequence SPEHQKVQQRKESKKPPAKLQPRA. Basic and acidic residues predominate over residues 31 to 43; that stretch reads EHQKVQQRKESKK. Positions 52 to 75 are cleaved as a propeptide — removed in mature form; that stretch reads ALEGLIHPEDTSQVEGAEDELEIR. Leu-98 bears the Leucine amide mark. A propeptide spans 99–117 (removed in mature form); the sequence is GKFLQDVLWEEADEVLADE.

Belongs to the motilin family. O-octanoylated by GOAT/MBOAT4. O-octanoylation or O-decanoylation is essential for ghrelin activity. The O-decanoylated forms Ghrelin-27-C10 and Ghrelin-28-C10 differ in the length of the carbon backbone of the carboxylic acid bound to Ser-26. A small fraction of ghrelin, ghrelin-27-C10:1, ghrelin-27-C10:2, ghrelin-28-C8:1, ghrelin-28-C10:1, and ghrelin-28-C10:2, may be modified with singly or doubly unsaturated carboxylic acids. Post-translationally, amidation of Leu-98 is essential for obestatin activity.

Its subcellular location is the secreted. Ghrelin is the ligand for growth hormone secretagogue receptor type 1 (GHSR). Induces the release of growth hormone from the pituitary. Has an appetite-stimulating effect, induces adiposity and stimulates gastric acid secretion. Involved in growth regulation. In terms of biological role, obestatin may be the ligand for GPR39. May have an appetite-reducing effect resulting in decreased food intake. May reduce gastric emptying activity and jejunal motility. The sequence is that of Appetite-regulating hormone (GHRL) from Felis catus (Cat).